We begin with the raw amino-acid sequence, 478 residues long: PTS system mannitol-specific EIICB component (478 aa).

Residues 1–29 (MQQQEQQQGGMKVKVQRFGSYLSGMIMPN) are Cytoplasmic-facing. A PTS EIIC type-2 domain is found at 18–347 (FGSYLSGMIM…VILKSSKASE (330 aa)). A helical transmembrane segment spans residues 30–51 (IGAFIAWGIITALFIPAGWFPN). Topologically, residues 52-55 (EQLN) are extracellular. A helical membrane pass occupies residues 56 to 76 (TLVSPMITYLLPLLIAYTGGK). Residues 77–139 (MIYDHRGGVV…QGFEMLINNF (63 aa)) are Cytoplasmic-facing. A helical membrane pass occupies residues 140–161 (TAGIVGAALTILAFYAIGPVVL). Over 162–170 (TLNKLLAAG) the chain is Extracellular. A helical membrane pass occupies residues 171–191 (VEVIVHANLLPVASVFVEPAK). At 192 to 278 (VLFLNNAINH…ILMKPALILA (87 aa)) the chain is on the cytoplasmic side. Residues 279–298 (AIAGGASGLLTFTIFNAGLV) traverse the membrane as a helical segment. The Extracellular segment spans residues 299–318 (AAASPGSIIALMAMTPRGGY). Residues 319–340 (FGVLAGVLVAAAVSFIVSAVIL) traverse the membrane as a helical segment. Residues 341–478 (KSSKASEEDL…YDELIEKLKK (138 aa)) are Cytoplasmic-facing. Residues 390 to 478 (NKIIFACDAG…YDELIEKLKK (89 aa)) form the PTS EIIB type-2 domain. Cys396 acts as the Phosphocysteine intermediate; for EIIB activity in catalysis. The residue at position 396 (Cys396) is a Phosphocysteine; by EIIA.

In terms of assembly, homodimer.

The protein resides in the cell membrane. The enzyme catalyses D-mannitol(out) + N(pros)-phospho-L-histidyl-[protein] = D-mannitol 1-phosphate(in) + L-histidyl-[protein]. Its function is as follows. The phosphoenolpyruvate-dependent sugar phosphotransferase system (sugar PTS), a major carbohydrate active transport system, catalyzes the phosphorylation of incoming sugar substrates concomitantly with their translocation across the cell membrane. The enzyme II CmtAB PTS system is involved in D-mannitol transport. This Bacillus subtilis (strain 168) protein is PTS system mannitol-specific EIICB component.